We begin with the raw amino-acid sequence, 25 residues long: Caerin-1.4 (25 aa).

Leucine amide is present on L25.

This sequence belongs to the frog skin active peptide (FSAP) family. Caerin subfamily. Expressed by the skin parotoid and/or rostral glands.

The protein resides in the secreted. Functionally, antibacterial peptide, that adopts an alpha helical conformation which can disrupt bacterial membranes. Each caerin displays a different antimicrobial specificity. The sequence is that of Caerin-1.4 from Ranoidea caerulea (Green tree frog).